The chain runs to 98 residues: Large ribosomal subunit protein eL14 (98 aa).

The protein belongs to the eukaryotic ribosomal protein eL14 family.

The protein is Large ribosomal subunit protein eL14 of Hyperthermus butylicus (strain DSM 5456 / JCM 9403 / PLM1-5).